The primary structure comprises 360 residues: MWKGGNQEAVIEGSGGELGVPGSWGLQDAACHLARASLPIMFPWPLPLGSSALTMLLGALTSLFLWYCYRLGSQDMQALGTGSRAGGVSGMPDVCSQTGPRGLGDSGEGPRAEGLVSRRLRAYARRYSWAGMGRVRRAAQGGSGLTGGAGVMGIQRPGLLFLPDLPSSPFVPRDAQRHDVELLQSSFPAILRDFGAVSWDFSGTTPLPRGWSPPLAPGCYQLLLYQAGRCQPSNCRRCPGAYRALRGLRSFMSANTFGNAGFSVLLPGARLEGRCGPTNARVRCHLGLKIPPGCELVVGGEPQCWAEGHCLLVDDSFLHTVAHNGSPEDGPRVVFIVDLWHPNVAGAERQALDFVFAPDP.

The Cytoplasmic portion of the chain corresponds to 1–45 (MWKGGNQEAVIEGSGGELGVPGSWGLQDAACHLARASLPIMFPWP). The helical transmembrane segment at 46–68 (LPLGSSALTMLLGALTSLFLWYC) threads the bilayer. The Lumenal segment spans residues 69–360 (YRLGSQDMQA…ALDFVFAPDP (292 aa)).

Belongs to the aspartyl/asparaginyl beta-hydroxylase family.

Its subcellular location is the membrane. The chain is Aspartate beta-hydroxylase domain-containing protein 1 (Asphd1) from Mus musculus (Mouse).